Consider the following 29-residue polypeptide: Cytochrome b6-f complex subunit 8 (29 aa).

Residues 3-23 (IVSLAWAVLMVVFTFSLSLVV) traverse the membrane as a helical segment.

This sequence belongs to the PetN family. The 4 large subunits of the cytochrome b6-f complex are cytochrome b6, subunit IV (17 kDa polypeptide, PetD), cytochrome f and the Rieske protein, while the 4 small subunits are PetG, PetL, PetM and PetN. The complex functions as a dimer.

It is found in the plastid. It localises to the chloroplast thylakoid membrane. In terms of biological role, component of the cytochrome b6-f complex, which mediates electron transfer between photosystem II (PSII) and photosystem I (PSI), cyclic electron flow around PSI, and state transitions. In Drimys granadensis, this protein is Cytochrome b6-f complex subunit 8.